The primary structure comprises 432 residues: Transcriptional adapter 3-A (432 aa).

Disordered stretches follow at residues 90-127 (HELG…RNMQ) and 275-314 (SPVE…TKSL). Positions 293–305 (DGASTSPRSQNKP) are enriched in polar residues. A coiled-coil region spans residues 335-398 (ADDSEDEVLA…NEVMDAFRKI (64 aa)).

Belongs to the NGG1 family.

It is found in the nucleus. Functions as a component of the PCAF complex. The PCAF complex is capable of efficiently acetylating histones in a nucleosomal context. This is Transcriptional adapter 3-A (tada3-a) from Xenopus laevis (African clawed frog).